The chain runs to 182 residues: uncharacterized protein (182 aa).

In terms of domain architecture, Nudix hydrolase spans 36–164 (LRHRATYIVV…TPDSLKALSL (129 aa)). Positions 73–95 (GGVVQSGENYLESARREAEEELG) match the Nudix box motif. Positions 89 and 93 each coordinate Mg(2+).

It belongs to the Nudix hydrolase family. Mg(2+) serves as cofactor.

This is an uncharacterized protein from Yersinia pestis.